Reading from the N-terminus, the 543-residue chain is MEMFCYQCQETLRNEACVAQGVCGKSPETANLQDLLIYVLKGISYWANKARELNVEDESVDLFVAEGLFVTITNVNFDEGRIVEYIDEAVDKRRIIENKFKEVYEKKYNEKFQEKVPDAAVWNPKDNNEDEYLNKAVEVGVLSESDEDIRSLKNFLVIGLKGVAAYTDHAYILKHSNDDILAFIEKALAETLREDITVDELMNLVLKIGEYGVNAMALLDEANTSTFGNPEITQVYTGTYETPAILVSGHDLLDLYEILEQTKGKGIKVYTHGEMLPANAYPGLKKYEHLAGNFGGSWWKQQQEFEDFGGAVVMTTNCIQKPRNSYKDRIFTTGLVGWPDVQHIPNRKKDGQKDFTPVIQKALEIGPIKKREGKAITIGFAHEQTAQVADKIVEAVKSGKITKFYVMGGCDGRNKDREYYTNFAKDLPKSAVILTAGCAKYRYNMLDLGDIDGIPRVIDAGQCNDSYSLVLTALKLKEAFDLKDINELPIEYNIAWYEQKAVTVLLSLLYMGVKGIRLGPTLPAFLSPNVLETVAKTFDIKTI.

Positions 5, 8, 17, and 23 each coordinate [4Fe-4S] cluster. Residues H250, E274, C318, C410, C438, C463, E498, and K500 each coordinate hybrid [4Fe-2O-2S] cluster. C410 carries the post-translational modification Cysteine persulfide.

Belongs to the HCP family. It depends on [4Fe-4S] cluster as a cofactor. Hybrid [4Fe-2O-2S] cluster serves as cofactor.

It is found in the cytoplasm. The catalysed reaction is A + NH4(+) + H2O = hydroxylamine + AH2 + H(+). Functionally, catalyzes the reduction of hydroxylamine to form NH(3) and H(2)O. This is Hydroxylamine reductase from Petrotoga mobilis (strain DSM 10674 / SJ95).